We begin with the raw amino-acid sequence, 330 residues long: Ornithine carbamoyltransferase (330 aa).

Residues 57–60 (STRT), Q84, R108, and 135–138 (HPTQ) each bind carbamoyl phosphate. L-ornithine contacts are provided by residues N168, D232, and 236–237 (SM). Residues 273 to 274 (CL) and R318 contribute to the carbamoyl phosphate site.

Belongs to the aspartate/ornithine carbamoyltransferase superfamily. OTCase family.

Its subcellular location is the cytoplasm. The catalysed reaction is carbamoyl phosphate + L-ornithine = L-citrulline + phosphate + H(+). Its pathway is amino-acid biosynthesis; L-arginine biosynthesis; L-arginine from L-ornithine and carbamoyl phosphate: step 1/3. In terms of biological role, reversibly catalyzes the transfer of the carbamoyl group from carbamoyl phosphate (CP) to the N(epsilon) atom of ornithine (ORN) to produce L-citrulline. This is Ornithine carbamoyltransferase from Alkaliphilus metalliredigens (strain QYMF).